The sequence spans 117 residues: Small ribosomal subunit protein uS13 (117 aa).

The disordered stretch occupies residues 94–117; sequence SLPLRGQRTKTNARTRKGPRRLIK.

The protein belongs to the universal ribosomal protein uS13 family. Part of the 30S ribosomal subunit. Forms a loose heterodimer with protein S19. Forms two bridges to the 50S subunit in the 70S ribosome.

Functionally, located at the top of the head of the 30S subunit, it contacts several helices of the 16S rRNA. In the 70S ribosome it contacts the 23S rRNA (bridge B1a) and protein L5 of the 50S subunit (bridge B1b), connecting the 2 subunits; these bridges are implicated in subunit movement. Contacts the tRNAs in the A and P-sites. This chain is Small ribosomal subunit protein uS13, found in Vesicomyosocius okutanii subsp. Calyptogena okutanii (strain HA).